The sequence spans 100 residues: NADH-quinone oxidoreductase subunit K (100 aa).

3 consecutive transmembrane segments (helical) span residues 4-24 (LNYG…SLLI), 29-49 (IFIL…FILI), and 60-80 (VLYI…LAIF).

This sequence belongs to the complex I subunit 4L family. NDH-1 is composed of 13 different subunits. Subunits NuoA, H, J, K, L, M, N constitute the membrane sector of the complex.

It is found in the cell membrane. It catalyses the reaction a quinone + NADH + 5 H(+)(in) = a quinol + NAD(+) + 4 H(+)(out). NDH-1 shuttles electrons from NADH, via FMN and iron-sulfur (Fe-S) centers, to quinones in the respiratory chain. The immediate electron acceptor for the enzyme in this species is believed to be ubiquinone. Couples the redox reaction to proton translocation (for every two electrons transferred, four hydrogen ions are translocated across the cytoplasmic membrane), and thus conserves the redox energy in a proton gradient. This Buchnera aphidicola subsp. Cinara cedri (strain Cc) protein is NADH-quinone oxidoreductase subunit K.